The chain runs to 419 residues: Fusaric acid cluster transcription factor FUB10 (419 aa).

Residues 16 to 47 (CDRCRAQKLRCHRDSGHSTDACLRCLKSGIEC) constitute a DNA-binding region (zn(2)-C6 fungal-type). The tract at residues 50–92 (SKARPTGRPPSRQVQPTVVVEQGDTSSSSHTTDSSPSAGGTDM) is disordered. The span at 74–86 (TSSSSHTTDSSPS) shows a compositional bias: low complexity.

Its subcellular location is the nucleus. Functionally, transcription factor that regulates the expression of the gene cluster that mediates the biosynthesis of fusaric acid, a mycotoxin with low to moderate toxicity to animals and humans, but with high phytotoxic properties. In Gibberella fujikuroi (strain CBS 195.34 / IMI 58289 / NRRL A-6831) (Bakanae and foot rot disease fungus), this protein is Fusaric acid cluster transcription factor FUB10.